Reading from the N-terminus, the 276-residue chain is uncharacterized protein (276 aa).

15 to 22 (GKGGVGKS) contributes to the ATP binding site. 2 4Fe-4S ferredoxin-type domains span residues 68–96 (EIYE…DFKI) and 92–121 (GDFK…PIKR). [4Fe-4S] cluster is bound by residues C76, C79, C82, C86, C101, C104, C107, and C111.

This is an uncharacterized protein from Methanocaldococcus jannaschii (strain ATCC 43067 / DSM 2661 / JAL-1 / JCM 10045 / NBRC 100440) (Methanococcus jannaschii).